The chain runs to 363 residues: DNA primase small subunit PriS (363 aa).

Residues Asp-105, Asp-107, and Asp-265 contribute to the active site.

Belongs to the eukaryotic-type primase small subunit family. Heterodimer of a small subunit (PriS) and a large subunit (PriL). The cofactor is Mg(2+). Mn(2+) is required as a cofactor.

In terms of biological role, catalytic subunit of DNA primase, an RNA polymerase that catalyzes the synthesis of short RNA molecules used as primers for DNA polymerase during DNA replication. The small subunit contains the primase catalytic core and has DNA synthesis activity on its own. Binding to the large subunit stabilizes and modulates the activity, increasing the rate of DNA synthesis while decreasing the length of the DNA fragments, and conferring RNA synthesis capability. The DNA polymerase activity may enable DNA primase to also catalyze primer extension after primer synthesis. May also play a role in DNA repair. The protein is DNA primase small subunit PriS of Methanococcus maripaludis (strain C7 / ATCC BAA-1331).